The following is a 310-amino-acid chain: Olfactory receptor 5P56 (310 aa).

At 1–25 (MEAQNHTTVKEFILLGLTENSTLRV) the chain is on the extracellular side. Residues asparagine 5 and asparagine 20 are each glycosylated (N-linked (GlcNAc...) asparagine). The helical transmembrane segment at 26 to 46 (ILFMIFLGIYTVTLVGNFSII) threads the bilayer. Over 47 to 54 (SLIRSCPQ) the chain is Cytoplasmic. Residues 55–75 (LHTPMYLFLSHLALVDIGFST) traverse the membrane as a helical segment. The Extracellular segment spans residues 76–99 (SITPIMLTGFLGHTVTLSVAACVA). An intrachain disulfide couples cysteine 97 to cysteine 189. Residues 100 to 120 (QFCIAVTFGTVECFLLAVMAY) traverse the membrane as a helical segment. Residues 121 to 133 (DRYVAICSPLLYS) are Cytoplasmic-facing. The chain crosses the membrane as a helical span at residues 134–154 (THMSPRICFLLVGASYVGGCV). Residues 155 to 196 (NSGTFTSCLLILSFCGPNQIDHFFCDFPAVLKLSCSDVSIIG) are Extracellular-facing. The helical transmembrane segment at 197–217 (IIPSISAGSIIVITVFVIAVS) threads the bilayer. The Cytoplasmic segment spans residues 218-237 (YTYILITILNMRSTEGRHKA). The helical transmembrane segment at 238-258 (FSTCTSHLTAVTLYYGTITFI) threads the bilayer. At 259-271 (YVMPKSNYSTAQN) the chain is on the extracellular side. Asparagine 265 is a glycosylation site (N-linked (GlcNAc...) asparagine). The chain crosses the membrane as a helical span at residues 272–292 (KILSVFYTVVIPMLNPLIYSL). Topologically, residues 293–310 (RNRDVKEALRKAIIRIFP) are cytoplasmic.

Belongs to the G-protein coupled receptor 1 family.

The protein localises to the cell membrane. In terms of biological role, potential odorant receptor. This is Olfactory receptor 5P56 from Mus musculus (Mouse).